The chain runs to 257 residues: MLDRIRVVLVNTSHPGNIGGAARAMKNMGLSQLVLVQPESFPHGDAVARASGATDILDAARVVDTLEEALSGCSVVLGTSARDRRIPWPLLDPRECATTCLEHLEANGEVALVFGREYAGLTNEELQRCQFHVHIPSDPEFGSLNLAAAVQVLTYEVRMAWLAAQGKPTKMEKFESTSMLNTELVTADELELYYAHLERTLIDIGFLDPEKPRHLMSRLRRLYGRSAISKLEMNILRGILTETQKVARGLSYKRSDD.

S-adenosyl-L-methionine is bound by residues 79–82 (TSAR), 115–117 (GRE), Ile135, and 142–144 (GSL).

The protein belongs to the class IV-like SAM-binding methyltransferase superfamily. RNA methyltransferase TrmH family. As to quaternary structure, homodimer.

The protein resides in the cytoplasm. The catalysed reaction is cytidine(32) in tRNA + S-adenosyl-L-methionine = 2'-O-methylcytidine(32) in tRNA + S-adenosyl-L-homocysteine + H(+). It carries out the reaction uridine(32) in tRNA + S-adenosyl-L-methionine = 2'-O-methyluridine(32) in tRNA + S-adenosyl-L-homocysteine + H(+). It catalyses the reaction adenosine(32) in tRNA + S-adenosyl-L-methionine = 2'-O-methyladenosine(32) in tRNA + S-adenosyl-L-homocysteine + H(+). Its function is as follows. Catalyzes the formation of 2'O-methylated cytidine (Cm32), 2'O-methylated uridine (Um32) or 2'O-methylated adenosine (Am32) at position 32 in tRNA. Confers resistance to oxidative stress. The sequence is that of tRNA (cytidine/uridine/adenosine-2'-O-)-methyltransferase TrmJ from Pseudomonas aeruginosa (strain UCBPP-PA14).